Consider the following 141-residue polypeptide: Hemoglobin subunit alpha-A (141 aa).

The Globin domain maps to 1-141; it reads VLSAADKTNV…VSTVLTAKYR (141 aa). H58 contacts O2. H87 serves as a coordination point for heme b.

It belongs to the globin family. Heterotetramer of two alpha chains and two beta chains. As to expression, red blood cells.

In terms of biological role, involved in oxygen transport from the lung to the various peripheral tissues. This is Hemoglobin subunit alpha-A (HBAA) from Eudynamys scolopaceus (Western koel).